Here is a 329-residue protein sequence, read N- to C-terminus: DNA-directed RNA polymerase subunit alpha (329 aa).

The tract at residues 1–234 (MQGSVTEFLK…EQLDAFVELR (234 aa)) is alpha N-terminal domain (alpha-NTD). Residues 248 to 329 (FDPILLRPVD…WPPASLADDL (82 aa)) form an alpha C-terminal domain (alpha-CTD) region.

The protein belongs to the RNA polymerase alpha chain family. Homodimer. The RNAP catalytic core consists of 2 alpha, 1 beta, 1 beta' and 1 omega subunit. When a sigma factor is associated with the core the holoenzyme is formed, which can initiate transcription.

It carries out the reaction RNA(n) + a ribonucleoside 5'-triphosphate = RNA(n+1) + diphosphate. In terms of biological role, DNA-dependent RNA polymerase catalyzes the transcription of DNA into RNA using the four ribonucleoside triphosphates as substrates. This is DNA-directed RNA polymerase subunit alpha from Shewanella loihica (strain ATCC BAA-1088 / PV-4).